We begin with the raw amino-acid sequence, 332 residues long: MNITTLTNSISTSSFSPNNTNGSSTETVNSDIKTTTSSHPVSSLTMLNDTLHNIRTTNQALKKELSQKTLTKTSLEEIALHSSQISMDVNKSAQLLNILSKTEYPINKDARELLHSAPKEAELDGYEMISHRELWAKIANSINDINEQYLKVYEHAVSSYTQMYQEFSAVLSSLAGWISPGGNDGNSVKLQVKSLKDALTTLKKNYEDKPLYPATNTVSEQEANKWLTELGGTIGTVSAKNGGYVVSINMTPIYNMLNRLDNLGGNGEVVLDNAKYQAWNAGFSAEDETMKNNLQTLVQKYSNANSIFDNLVKVLSSTISSCTDTDKLFLHF.

Residues 1-25 (MNITTLTNSISTSSFSPNNTNGSST) are compositionally biased toward low complexity. The tract at residues 1-43 (MNITTLTNSISTSSFSPNNTNGSSTETVNSDIKTTTSSHPVSS) is disordered. The segment covering 26-43 (ETVNSDIKTTTSSHPVSS) has biased composition (polar residues). Residues 44-77 (LTMLNDTLHNIRTTNQALKKELSQKTLTKTSLEE) are a coiled coil. The interval 192–267 (VKSLKDALTT…NRLDNLGGNG (76 aa)) is ipaB binding.

Belongs to the invasin protein D family.

Its subcellular location is the secreted. Its function is as follows. Required for bacterial invasion of host cells. Controls IpaB and IpaC secretion, and the efficiency with which they are physically inserted into target cell membranes. These proteins are exported via T3SS to form a pore in the host membrane that allows the translocation of the other effectors into the host cytoplasm. Along with IpaB, is essential for both blocking secretion through the Mxi/Spa translocon in the absence of a secretion-inducing signal, and for controlling the level of secretion in the presence of this signal. In Shigella dysenteriae, this protein is Invasin IpaD (ipaD).